The following is a 630-amino-acid chain: uncharacterized protein (630 aa).

The next 4 membrane-spanning stretches (helical) occupy residues 254-274 (MFYAVINTYLIMLISVEELRV), 504-524 (IALLESLSFSWLDPFYGLTSI), 564-584 (MIFAYIAAFVVGFINFFSMVF), and 601-621 (IIVISIASVLAFILIVIAVLF).

The protein localises to the cell membrane. This is an uncharacterized protein from Mycoplasma genitalium (strain ATCC 33530 / DSM 19775 / NCTC 10195 / G37) (Mycoplasmoides genitalium).